The primary structure comprises 199 residues: Photosystem I reaction center subunit XI (199 aa).

2 helical membrane-spanning segments follow: residues 108–128 and 165–185; these read VTAG…LLVL and FWLG…TLHL.

It belongs to the PsaL family.

It localises to the cellular thylakoid membrane. This chain is Photosystem I reaction center subunit XI, found in Prochlorococcus marinus (strain MIT 9215).